The sequence spans 220 residues: GTP-binding nuclear protein GSP2/CNR2 (220 aa).

Residue S2 is modified to N-acetylserine. S2 carries the phosphoserine modification. A Small GTPase Ran-type domain is found at 10-174; sequence EVPTFKLVLV…LWLARKLAGN (165 aa). Position 21–28 (21–28) interacts with GTP; sequence DGGTGKTT. Residues 40–48 are switch-I; the sequence is KKYIATIGV. GTP-binding positions include G71, 125-128, and 153-155; these read NKVD and SAK. A switch-II region spans residues 71–87; it reads GQEKFGGLRDGYYINAQ.

The protein belongs to the small GTPase superfamily. Ran family. As to quaternary structure, found in a nuclear export complex with RanGTP, exportin and pre-miRNA.

The protein localises to the nucleus. Functionally, GTP-binding protein involved in nucleocytoplasmic transport. Required for the import of protein into the nucleus and also for RNA export. Not essential for cell viability. The sequence is that of GTP-binding nuclear protein GSP2/CNR2 (GSP2) from Saccharomyces cerevisiae (strain ATCC 204508 / S288c) (Baker's yeast).